Reading from the N-terminus, the 206-residue chain is Pyridoxine/pyridoxamine 5'-phosphate oxidase (206 aa).

Residues 55-60 (RVVLLK), 70-71 (YT), arginine 76, lysine 77, and glutamine 99 contribute to the FMN site. Lysine 60 serves as a coordination point for substrate. Substrate is bound by residues tyrosine 117, arginine 121, and serine 125. FMN contacts are provided by residues 134-135 (QS) and tryptophan 179. 185–187 (RLH) is a substrate binding site. FMN is bound at residue arginine 189.

It belongs to the pyridoxamine 5'-phosphate oxidase family. As to quaternary structure, homodimer. FMN is required as a cofactor.

The catalysed reaction is pyridoxamine 5'-phosphate + O2 + H2O = pyridoxal 5'-phosphate + H2O2 + NH4(+). It carries out the reaction pyridoxine 5'-phosphate + O2 = pyridoxal 5'-phosphate + H2O2. It functions in the pathway cofactor metabolism; pyridoxal 5'-phosphate salvage; pyridoxal 5'-phosphate from pyridoxamine 5'-phosphate: step 1/1. It participates in cofactor metabolism; pyridoxal 5'-phosphate salvage; pyridoxal 5'-phosphate from pyridoxine 5'-phosphate: step 1/1. Its function is as follows. Catalyzes the oxidation of either pyridoxine 5'-phosphate (PNP) or pyridoxamine 5'-phosphate (PMP) into pyridoxal 5'-phosphate (PLP). The protein is Pyridoxine/pyridoxamine 5'-phosphate oxidase of Myxococcus xanthus (strain DK1622).